A 179-amino-acid chain; its full sequence is ATP synthase subunit delta (179 aa).

The protein belongs to the ATPase delta chain family. In terms of assembly, F-type ATPases have 2 components, F(1) - the catalytic core - and F(0) - the membrane proton channel. F(1) has five subunits: alpha(3), beta(3), gamma(1), delta(1), epsilon(1). F(0) has three main subunits: a(1), b(2) and c(10-14). The alpha and beta chains form an alternating ring which encloses part of the gamma chain. F(1) is attached to F(0) by a central stalk formed by the gamma and epsilon chains, while a peripheral stalk is formed by the delta and b chains.

The protein localises to the cell membrane. Its function is as follows. F(1)F(0) ATP synthase produces ATP from ADP in the presence of a proton or sodium gradient. F-type ATPases consist of two structural domains, F(1) containing the extramembraneous catalytic core and F(0) containing the membrane proton channel, linked together by a central stalk and a peripheral stalk. During catalysis, ATP synthesis in the catalytic domain of F(1) is coupled via a rotary mechanism of the central stalk subunits to proton translocation. Functionally, this protein is part of the stalk that links CF(0) to CF(1). It either transmits conformational changes from CF(0) to CF(1) or is implicated in proton conduction. The protein is ATP synthase subunit delta of Staphylococcus aureus (strain bovine RF122 / ET3-1).